A 594-amino-acid polypeptide reads, in one-letter code: Probable glucose transporter rco-3 (594 aa).

Residues 1–13 are Cytoplasmic-facing; the sequence is MAIFAMGWQKPDN. Residues 14 to 34 form a helical membrane-spanning segment; the sequence is VAGSSAPAIMVGLFVATGGLL. The Extracellular portion of the chain corresponds to 35–73; it reads LGYDTGTINGILAMKSFKDHFSTGYIDGNGQPGIYPKES. A helical membrane pass occupies residues 74–94; the sequence is ALIVAMLSAGTAIGALLAAPL. The Cytoplasmic portion of the chain corresponds to 95 to 103; it reads GDHYGRRRS. A helical membrane pass occupies residues 104 to 124; the sequence is LIGAIGIFVIGAILQVCAYNI. D125 is a topological domain (extracellular). Residues 126–146 traverse the membrane as a helical segment; the sequence is LLVAGRTVAGVGIGIVSVLVP. Residues 147–159 are Cytoplasmic-facing; sequence LYQSEMAPKWIRG. A helical membrane pass occupies residues 160-180; that stretch reads TLVCTYQLSITMGLLAAAVVN. Residues 181-193 are Extracellular-facing; the sequence is ILTYKLKTAAAYR. Residues 194-214 form a helical membrane-spanning segment; that stretch reads VPIGLQLTWACVLALGLTVLP. The Cytoplasmic segment spans residues 215 to 293; sequence ETPRYLIKRG…TGCCLQMLQQ (79 aa). Residues 294–314 form a helical membrane-spanning segment; it reads LTGVNFIMYYGTTFFNNAGVG. The Extracellular segment spans residues 315–318; the sequence is NPFK. Residues 319 to 339 form a helical membrane-spanning segment; that stretch reads ISLIMQVINTASTIPGLFVVE. Topologically, residues 340–345 are cytoplasmic; sequence SWGRRR. The helical transmembrane segment at 346-366 threads the bilayer; it reads LLMVGAIGMAICQLLIAAFAT. The Extracellular portion of the chain corresponds to 367–378; that stretch reads ASGSNNLSAQNK. A glycan (N-linked (GlcNAc...) asparagine) is linked at N372. The helical transmembrane segment at 379–403 threads the bilayer; it reads VLITFVAIYIFFFAASWGPVVWVVT. Over 404–415 the chain is Cytoplasmic; sequence SEIYPLKVRAKS. Residues 416 to 436 traverse the membrane as a helical segment; it reads MSITTASNWFLNFGIAYGTPY. Residues 437 to 454 are Extracellular-facing; the sequence is MQTNSAASDESSIDLGSK. The helical transmembrane segment at 455–475 threads the bilayer; sequence VFFVWGAFCIVAVGFVWCMVY. The Cytoplasmic portion of the chain corresponds to 476–594; sequence ETSKISLEQI…ASLGNIDLSY (119 aa). Residues 512 to 594 form a disordered region; sequence DLGFSDGGIP…ASLGNIDLSY (83 aa). Residues 524–576 are compositionally biased toward low complexity; sequence QQLQQQPQQPQQQQQQHHQQQQHQLQVDLQQSQSRTSNSSTSQTDTGGSNNTG.

This sequence belongs to the major facilitator superfamily. Sugar transporter (TC 2.A.1.1) family.

Its subcellular location is the membrane. In terms of biological role, probable glucose transporter. Involved in sugar transport, carbon catabolite repression, and initiation of conidiophore development. The polypeptide is Probable glucose transporter rco-3 (rco-3) (Neurospora crassa (strain ATCC 24698 / 74-OR23-1A / CBS 708.71 / DSM 1257 / FGSC 987)).